The following is a 294-amino-acid chain: Pyrroline-5-carboxylate reductase (294 aa).

The protein belongs to the pyrroline-5-carboxylate reductase family.

Its subcellular location is the cytoplasm. It catalyses the reaction L-proline + NADP(+) = (S)-1-pyrroline-5-carboxylate + NADPH + 2 H(+). It carries out the reaction L-proline + NAD(+) = (S)-1-pyrroline-5-carboxylate + NADH + 2 H(+). It participates in amino-acid biosynthesis; L-proline biosynthesis; L-proline from L-glutamate 5-semialdehyde: step 1/1. In terms of biological role, catalyzes the reduction of 1-pyrroline-5-carboxylate (PCA) to L-proline. The chain is Pyrroline-5-carboxylate reductase from Mycobacterium leprae (strain TN).